Reading from the N-terminus, the 272-residue chain is Homeobox protein Hox-D12 (272 aa).

Positions serine 204–valine 263 form a DNA-binding region, homeobox.

The protein belongs to the Abd-B homeobox family.

It is found in the nucleus. In terms of biological role, sequence-specific transcription factor which is part of a developmental regulatory system that provides cells with specific positional identities on the anterior-posterior axis. This is Homeobox protein Hox-D12 (HOXD12) from Heterodontus francisci (Horn shark).